The sequence spans 1365 residues: Polyprotein ABA-1 (1365 aa).

It belongs to the NPA family. In terms of processing, nematode polyprotein allergens (NPAs) are synthesized as large polypeptides that are subsequently proteolytically cleaved to active polypeptide units. In terms of tissue distribution, pseudocoelomic fluid.

Functionally, has high binding affinity for fatty acids and retinoids. This Ascaris suum (Pig roundworm) protein is Polyprotein ABA-1 (ABA-1).